The following is a 66-amino-acid chain: Beta-toxin ChFII.9 (66 aa).

The LCN-type CS-alpha/beta domain occupies 1-66 (KEGYIVDYHT…VWPLPNKRCK (66 aa)). Intrachain disulfides connect cysteine 12/cysteine 65, cysteine 16/cysteine 41, cysteine 25/cysteine 46, and cysteine 29/cysteine 48. Position 66 is a lysine amide (lysine 66).

As to expression, expressed by the venom gland.

It localises to the secreted. Functionally, beta toxins bind voltage independently at site-4 of sodium channels (Nav) and shift the activation voltage toward more negative potentials, thereby affecting sodium channel activation CC and promoting spontaneous and repetitive firing. The protein is Beta-toxin ChFII.9 of Centruroides hirsutipalpus (Scorpion).